A 224-amino-acid chain; its full sequence is 2-C-methyl-D-erythritol 4-phosphate cytidylyltransferase (224 aa).

Belongs to the IspD/TarI cytidylyltransferase family. IspD subfamily.

It catalyses the reaction 2-C-methyl-D-erythritol 4-phosphate + CTP + H(+) = 4-CDP-2-C-methyl-D-erythritol + diphosphate. It functions in the pathway isoprenoid biosynthesis; isopentenyl diphosphate biosynthesis via DXP pathway; isopentenyl diphosphate from 1-deoxy-D-xylulose 5-phosphate: step 2/6. Functionally, catalyzes the formation of 4-diphosphocytidyl-2-C-methyl-D-erythritol from CTP and 2-C-methyl-D-erythritol 4-phosphate (MEP). This Caldicellulosiruptor saccharolyticus (strain ATCC 43494 / DSM 8903 / Tp8T 6331) protein is 2-C-methyl-D-erythritol 4-phosphate cytidylyltransferase.